Here is a 181-residue protein sequence, read N- to C-terminus: Histone deacetylase complex subunit SAP30L (181 aa).

The segment at Cys26–His74 adopts an Atypical zinc-finger fold. A disordered region spans residues Arg82–Val103. The short motif at Asn83 to Lys88 is the Nuclear localization signal (NLS) element. Positions Arg85 to Arg87 are important for DNA and phosphoinositide binding.

The protein belongs to the SAP30 family. As to quaternary structure, interacts with components of the histone deacetylase complex sin3a, hdac1 and hdac2. Binds histones and nucleosomes.

It is found in the nucleus. Its subcellular location is the nucleolus. Functionally, functions as a transcription repressor, probably via its interaction with histone deacetylase complexes. Involved in the functional recruitment of the class 1 Sin3-histone deacetylase complex (HDAC) to the nucleolus. Binds DNA, apparently without sequence-specificity, and bends bound double-stranded DNA. Binds phosphoinositol phosphates (phosphoinositol 3-phosphate, phosphoinositol 4-phosphate and phosphoinositol 5-phosphate) via the same basic sequence motif that mediates DNA binding and nuclear import. This chain is Histone deacetylase complex subunit SAP30L (sap30l), found in Xenopus tropicalis (Western clawed frog).